The sequence spans 411 residues: D-galactonate dehydratase family member SBI_01856 (411 aa).

2 residues coordinate substrate: Asn-45 and His-130. The Proton donor/acceptor role is filled by Tyr-167. Mg(2+) is bound at residue Asp-219. The active-site Proton donor/acceptor is His-221. Mg(2+)-binding residues include Glu-245 and Glu-271. The substrate site is built by Glu-271, Arg-292, His-321, Asp-325, and Glu-348.

It belongs to the mandelate racemase/muconate lactonizing enzyme family. GalD subfamily. The cofactor is Mg(2+).

The enzyme catalyses D-gluconate = 2-dehydro-3-deoxy-D-gluconate + H2O. Its function is as follows. Has low D-gluconate dehydratase activity (in vitro), suggesting that it has no significant role in D-gluconate degradation in vivo. Has no detectable activity with a panel of 70 other acid sugars (in vitro). The polypeptide is D-galactonate dehydratase family member SBI_01856 (Streptomyces bingchenggensis (strain BCW-1)).